The chain runs to 474 residues: Type I restriction enzyme EcoBI specificity subunit (474 aa).

This sequence belongs to the type-I restriction system S methylase family. In terms of assembly, the type I restriction/modification system is composed of three polypeptides R, M and S. The restriction enzyme has stoichiometry R(2)M(2)S(1) while the methyltransferase is M(2)S(1).

Functionally, the specificity (S) subunit of a type I restriction enzyme; this subunit dictates DNA sequence specificity. The M and S subunits together form a methyltransferase (MTase) that methylates A-3 on the top strand and A-4 on the bottom strand of the sequence 5'-TGAN(8)TGCT-3'. In the presence of the R subunit the complex can also act as an endonuclease, binding to the same target sequence but cutting the DNA some distance from this site. Whether the DNA is cut or modified depends on the methylation state of the target sequence. When the target site is unmodified, the DNA is cut. When the target site is hemimethylated, the complex acts as a maintenance MTase modifying the DNA so that both strands become methylated. After locating a non-methylated recognition site, the enzyme complex serves as a molecular motor that translocates DNA in an ATP-dependent manner until a collision occurs that triggers cleavage. This Escherichia coli protein is Type I restriction enzyme EcoBI specificity subunit.